Here is a 319-residue protein sequence, read N- to C-terminus: Coproporphyrin III ferrochelatase 2 (319 aa).

Fe-coproporphyrin III contacts are provided by residues Y13, R30, 46-47, S54, and Y125; that span reads RY. H181 and E262 together coordinate Fe(2+).

The protein belongs to the ferrochelatase family.

It localises to the cytoplasm. The catalysed reaction is Fe-coproporphyrin III + 2 H(+) = coproporphyrin III + Fe(2+). Its pathway is porphyrin-containing compound metabolism; protoheme biosynthesis. Involved in coproporphyrin-dependent heme b biosynthesis. Catalyzes the insertion of ferrous iron into coproporphyrin III to form Fe-coproporphyrin III. The sequence is that of Coproporphyrin III ferrochelatase 2 from Bacillus thuringiensis subsp. konkukian (strain 97-27).